Consider the following 356-residue polypeptide: Phospho-2-dehydro-3-deoxyheptonate aldolase, Tyr-sensitive (356 aa).

It belongs to the class-I DAHP synthase family. Requires a divalent metal cation as cofactor.

The enzyme catalyses D-erythrose 4-phosphate + phosphoenolpyruvate + H2O = 7-phospho-2-dehydro-3-deoxy-D-arabino-heptonate + phosphate. The protein operates within metabolic intermediate biosynthesis; chorismate biosynthesis; chorismate from D-erythrose 4-phosphate and phosphoenolpyruvate: step 1/7. With respect to regulation, specifically feedback inhibited by tyrosine with 50% inhibition observed at 9 microM tyrosine, pH 7.0. Stereospecific condensation of phosphoenolpyruvate (PEP) and D-erythrose-4-phosphate (E4P) giving rise to 3-deoxy-D-arabino-heptulosonate-7-phosphate (DAHP). The polypeptide is Phospho-2-dehydro-3-deoxyheptonate aldolase, Tyr-sensitive (aroF) (Escherichia coli (strain K12)).